Here is a 137-residue protein sequence, read N- to C-terminus: Small ribosomal subunit protein uS12 (137 aa).

The tract at residues 1–57 (MPTINQLVRKPRKSKVEKSKSPALNVGYNSHKKVQTNVSSPQKRGVATRVGTMTPKK) is disordered. Asp-102 bears the 3-methylthioaspartic acid mark.

It belongs to the universal ribosomal protein uS12 family. In terms of assembly, part of the 30S ribosomal subunit. Contacts proteins S8 and S17. May interact with IF1 in the 30S initiation complex.

In terms of biological role, with S4 and S5 plays an important role in translational accuracy. Its function is as follows. Interacts with and stabilizes bases of the 16S rRNA that are involved in tRNA selection in the A site and with the mRNA backbone. Located at the interface of the 30S and 50S subunits, it traverses the body of the 30S subunit contacting proteins on the other side and probably holding the rRNA structure together. The combined cluster of proteins S8, S12 and S17 appears to hold together the shoulder and platform of the 30S subunit. This Streptococcus sanguinis (strain SK36) protein is Small ribosomal subunit protein uS12.